Reading from the N-terminus, the 180-residue chain is Prothoracicotropic hormone (180 aa).

The first 15 residues, 1-15 (MKLLILCVMVHGLLA), serve as a signal peptide directing secretion. A propeptide spanning residues 16–64 (EGPGQVLWKEQVVAPEFLLDDREDIASNRNAFFYEDKRSFRPEGLGEQV) is cleaved from the precursor. Intrachain disulfides connect C88–C123 and C111–C175.

Homodimer; disulfide-linked.

The protein resides in the secreted. PTTH is a brain secretory polypeptide of insects which stimulates the prothoracic glands to produce and release ecdysone, the steroid essential to insect development. The polypeptide is Prothoracicotropic hormone (Camponotus floridanus (Florida carpenter ant)).